Consider the following 420-residue polypeptide: Diaminopimelate decarboxylase (420 aa).

An N6-(pyridoxal phosphate)lysine modification is found at lysine 54. Position 191 (histidine 191) interacts with substrate. Residues glycine 227 and 268-271 (EPGR) contribute to the pyridoxal 5'-phosphate site. Residues arginine 271, arginine 307, and tyrosine 311 each coordinate substrate. Cysteine 342 functions as the Proton donor in the catalytic mechanism. The substrate site is built by glutamate 343 and tyrosine 378. Tyrosine 378 lines the pyridoxal 5'-phosphate pocket.

This sequence belongs to the Orn/Lys/Arg decarboxylase class-II family. LysA subfamily. Pyridoxal 5'-phosphate serves as cofactor.

It catalyses the reaction meso-2,6-diaminopimelate + H(+) = L-lysine + CO2. Its pathway is amino-acid biosynthesis; L-lysine biosynthesis via DAP pathway; L-lysine from DL-2,6-diaminopimelate: step 1/1. Is activated by 2,3-dimercaptopropan-1-ol. In terms of biological role, specifically catalyzes the decarboxylation of meso-diaminopimelate (meso-DAP) to L-lysine. Is not active against the DD- or LL-isomers of diaminopimelate. The sequence is that of Diaminopimelate decarboxylase from Escherichia coli (strain K12).